The sequence spans 105 residues: Large ribosomal subunit protein eL36 (105 aa).

Residues 86–105 (QAGKKKRDDIANINRKASAK) are disordered.

This sequence belongs to the eukaryotic ribosomal protein eL36 family.

The sequence is that of Large ribosomal subunit protein eL36 (rpl36) from Dictyostelium discoideum (Social amoeba).